Reading from the N-terminus, the 149-residue chain is Arginine repressor (149 aa).

Belongs to the ArgR family.

Its subcellular location is the cytoplasm. The protein operates within amino-acid biosynthesis; L-arginine biosynthesis [regulation]. Its function is as follows. Regulates arginine biosynthesis genes. This Chlorobaculum parvum (strain DSM 263 / NCIMB 8327) (Chlorobium vibrioforme subsp. thiosulfatophilum) protein is Arginine repressor.